The following is a 204-amino-acid chain: Recombination protein RecR (204 aa).

The C4-type zinc-finger motif lies at 58–75; that stretch reads CSVCQNITDLGVDPCHIC. Positions 83-181 constitute a Toprim domain; it reads SVICVVESPT…NVTRIARGIP (99 aa).

Belongs to the RecR family.

Functionally, may play a role in DNA repair. It seems to be involved in an RecBC-independent recombinational process of DNA repair. It may act with RecF and RecO. The sequence is that of Recombination protein RecR from Chlorobaculum tepidum (strain ATCC 49652 / DSM 12025 / NBRC 103806 / TLS) (Chlorobium tepidum).